Reading from the N-terminus, the 316-residue chain is 4-hydroxy-3-methylbut-2-enyl diphosphate reductase (316 aa).

Residue C12 coordinates [4Fe-4S] cluster. Residues H43 and H81 each contribute to the (2E)-4-hydroxy-3-methylbut-2-enyl diphosphate site. The dimethylallyl diphosphate site is built by H43 and H81. Isopentenyl diphosphate is bound by residues H43 and H81. Residue C103 participates in [4Fe-4S] cluster binding. H131 is a binding site for (2E)-4-hydroxy-3-methylbut-2-enyl diphosphate. Residue H131 coordinates dimethylallyl diphosphate. Position 131 (H131) interacts with isopentenyl diphosphate. The active-site Proton donor is E133. Position 170 (T170) interacts with (2E)-4-hydroxy-3-methylbut-2-enyl diphosphate. C198 lines the [4Fe-4S] cluster pocket. (2E)-4-hydroxy-3-methylbut-2-enyl diphosphate contacts are provided by S226, N228, and S271. Residues S226, N228, and S271 each coordinate dimethylallyl diphosphate. Isopentenyl diphosphate is bound by residues S226, N228, and S271.

The protein belongs to the IspH family. The cofactor is [4Fe-4S] cluster.

The enzyme catalyses isopentenyl diphosphate + 2 oxidized [2Fe-2S]-[ferredoxin] + H2O = (2E)-4-hydroxy-3-methylbut-2-enyl diphosphate + 2 reduced [2Fe-2S]-[ferredoxin] + 2 H(+). It carries out the reaction dimethylallyl diphosphate + 2 oxidized [2Fe-2S]-[ferredoxin] + H2O = (2E)-4-hydroxy-3-methylbut-2-enyl diphosphate + 2 reduced [2Fe-2S]-[ferredoxin] + 2 H(+). It participates in isoprenoid biosynthesis; dimethylallyl diphosphate biosynthesis; dimethylallyl diphosphate from (2E)-4-hydroxy-3-methylbutenyl diphosphate: step 1/1. Its pathway is isoprenoid biosynthesis; isopentenyl diphosphate biosynthesis via DXP pathway; isopentenyl diphosphate from 1-deoxy-D-xylulose 5-phosphate: step 6/6. Catalyzes the conversion of 1-hydroxy-2-methyl-2-(E)-butenyl 4-diphosphate (HMBPP) into a mixture of isopentenyl diphosphate (IPP) and dimethylallyl diphosphate (DMAPP). Acts in the terminal step of the DOXP/MEP pathway for isoprenoid precursor biosynthesis. This chain is 4-hydroxy-3-methylbut-2-enyl diphosphate reductase, found in Bacillus thuringiensis (strain Al Hakam).